Consider the following 85-residue polypeptide: MEKKRYSKRYCRYTEAKISFIDYKDLDMLKHTLSERYKIMPRRLTGNSKKWQERVEVAIKRARHMALIPYIVDRKKVVDSPFKQH.

This sequence belongs to the bacterial ribosomal protein bS18 family. Part of the 30S ribosomal subunit. Forms a tight heterodimer with protein bS6.

Functionally, binds as a heterodimer with protein bS6 to the central domain of the 16S rRNA, where it helps stabilize the platform of the 30S subunit. The chain is Small ribosomal subunit protein bS18 from Helicobacter acinonychis (strain Sheeba).